The sequence spans 889 residues: Extended synaptotagmin-3 (889 aa).

Residues 1 to 65 form a disordered region; it reads MAQGDPGGQT…GPRDPGQGGA (65 aa). Over 1-66 the chain is Cytoplasmic; that stretch reads MAQGDPGGQT…PRDPGQGGAG (66 aa). 2 stretches are compositionally biased toward basic and acidic residues: residues 17–28 and 41–58; these read TDKKPDEPKATE and PGGEKGLRDPPGGEKGPR. 2 helical membrane-spanning segments follow: residues 67 to 91 and 92 to 112; these read EALAEALYGLGRPVLRAVLYLFPVY and LCGRFGLSPTWLLFGLFLWMF. Topologically, residues 113-889 are cytoplasmic; that stretch reads WTRNKKFKLA…ELTPTGLPTS (777 aa). In terms of domain architecture, SMP-LTD spans 155–333; the sequence is DVERVEWLNK…LPNRFTVPLS (179 aa). C2 domains are found at residues 331–452 and 468–618; these read PLSS…DEWF and WLSL…STIK. The Ca(2+) site is built by K363, D364, D376, D423, E424, D425, D427, D429, and D430. Positions 649–724 are disordered; sequence SIKRAQSQQH…GAVPESHTPS (76 aa). Positions 658 to 671 are enriched in basic residues; that stretch reads HKSHGKSHQAHHQA. Composition is skewed to low complexity over residues 672-682 and 691-714; these read HQTQQNHTVQQ and ISTTSQQANTSSSNPAPNQNPNST. The 123-residue stretch at 757-879 folds into the C2 3 domain; that stretch reads MTGEVEVSVR…DLVKGFTKWF (123 aa). A required for phosphatidylinositol 4,5-bisphosphate-dependent location at the cell membrane region spans residues 804–811; sequence RKWSGRKK.

Belongs to the extended synaptotagmin family.

Its subcellular location is the cell membrane. The protein localises to the endoplasmic reticulum membrane. Its function is as follows. Tethers the endoplasmic reticulum to the cell membrane and promotes the formation of appositions between the endoplasmic reticulum and the cell membrane. Binds glycerophospholipids in a barrel-like domain and may play a role in cellular lipid transport. The protein is Extended synaptotagmin-3 (esyt3) of Xenopus tropicalis (Western clawed frog).